Here is a 325-residue protein sequence, read N- to C-terminus: Melanocortin receptor 5 (325 aa).

Residues 1 to 37 (MNSSFHLHFLDLNLNATEGNLSGPNVKNKSSPCEDMG) lie on the Extracellular side of the membrane. N-linked (GlcNAc...) asparagine glycans are attached at residues Asn-2, Asn-15, Asn-20, and Asn-28. Residues 38–61 (IAVEVFLTLGVISLLENILVIGAI) traverse the membrane as a helical segment. Residues 62 to 73 (VKNKNLHSPMYF) are Cytoplasmic-facing. Residues 74–97 (FVCSLAVADMLVSMSSAWETITIY) form a helical membrane-spanning segment. At 98–114 (LLNNKHLVIADAFVRHI) the chain is on the extracellular side. The chain crosses the membrane as a helical span at residues 115-138 (DNVFDSMICISVVASMCSLLAIAV). Residues 139–155 (DRYVTIFYALRYHHIMT) are Cytoplasmic-facing. Residues 156-179 (ARRSGAIIAGIWAFCTGCGIVFIL) traverse the membrane as a helical segment. Residues 180–186 (YSESTYV) lie on the Extracellular side of the membrane. Residues 187–211 (ILCLISMFFAMLFLLVSLYIHMFLL) traverse the membrane as a helical segment. The Cytoplasmic segment spans residues 212–239 (ARTHVKRIAALPRASSARQRTSMQGAVT). A helical transmembrane segment spans residues 240-265 (VTMLLGVFTVCWAPFFLHLTLMLSCP). At 266–273 (QNLYCSCF) the chain is on the extracellular side. Residues 274 to 297 (MSHFNMYLILIMCNSVMDPLIYAF) form a helical membrane-spanning segment. Residues 298–325 (RSQEMRKTFKEIICCRGFRIACSFPRRD) are Cytoplasmic-facing. 2 S-palmitoyl cysteine lipidation sites follow: Cys-311 and Cys-312.

Belongs to the G-protein coupled receptor 1 family.

Its subcellular location is the cell membrane. Receptor for MSH (alpha, beta and gamma) and ACTH. The activity of this receptor is mediated by G proteins which activate adenylate cyclase. This receptor is a possible mediator of the immunomodulation properties of melanocortins. This is Melanocortin receptor 5 (MC5R) from Pan troglodytes (Chimpanzee).